We begin with the raw amino-acid sequence, 513 residues long: Na(+)/H(+) antiporter NhaB (513 aa).

A run of 12 helical transmembrane segments spans residues leucine 23–alanine 43, isoleucine 52–isoleucine 72, leucine 97–phenylalanine 117, leucine 120–phenylalanine 140, phenylalanine 144–isoleucine 164, leucine 202–proline 222, phenylalanine 238–leucine 258, alanine 303–isoleucine 323, threonine 348–isoleucine 368, leucine 391–isoleucine 411, alanine 447–isoleucine 467, and valine 475–phenylalanine 495.

The protein belongs to the NhaB Na(+)/H(+) (TC 2.A.34) antiporter family.

It is found in the cell inner membrane. The enzyme catalyses 2 Na(+)(in) + 3 H(+)(out) = 2 Na(+)(out) + 3 H(+)(in). In terms of biological role, na(+)/H(+) antiporter that extrudes sodium in exchange for external protons. This is Na(+)/H(+) antiporter NhaB from Shigella sonnei (strain Ss046).